The following is a 360-amino-acid chain: tRNA/tmRNA (uracil-C(5))-methyltransferase (360 aa).

S-adenosyl-L-methionine is bound by residues glutamine 185, tyrosine 213, asparagine 218, glutamate 234, and aspartate 294. Cysteine 319 functions as the Nucleophile in the catalytic mechanism. Glutamate 353 acts as the Proton acceptor in catalysis.

This sequence belongs to the class I-like SAM-binding methyltransferase superfamily. RNA M5U methyltransferase family. TrmA subfamily.

The catalysed reaction is uridine(54) in tRNA + S-adenosyl-L-methionine = 5-methyluridine(54) in tRNA + S-adenosyl-L-homocysteine + H(+). The enzyme catalyses uridine(341) in tmRNA + S-adenosyl-L-methionine = 5-methyluridine(341) in tmRNA + S-adenosyl-L-homocysteine + H(+). Its function is as follows. Dual-specificity methyltransferase that catalyzes the formation of 5-methyluridine at position 54 (m5U54) in all tRNAs, and that of position 341 (m5U341) in tmRNA (transfer-mRNA). The chain is tRNA/tmRNA (uracil-C(5))-methyltransferase from Nitratiruptor sp. (strain SB155-2).